Here is a 392-residue protein sequence, read N- to C-terminus: GTPase Obg (392 aa).

The region spanning M1–L159 is the Obg domain. Residues G121–P146 form a disordered region. Over residues R129–T145 the composition is skewed to polar residues. Residues A160–E333 enclose the OBG-type G domain. Residues G166–S173, F191–V195, D213–G216, N283–D286, and S314–F316 contribute to the GTP site. 2 residues coordinate Mg(2+): S173 and T193.

The protein belongs to the TRAFAC class OBG-HflX-like GTPase superfamily. OBG GTPase family. As to quaternary structure, monomer. Mg(2+) serves as cofactor.

It localises to the cytoplasm. Its function is as follows. An essential GTPase which binds GTP, GDP and possibly (p)ppGpp with moderate affinity, with high nucleotide exchange rates and a fairly low GTP hydrolysis rate. Plays a role in control of the cell cycle, stress response, ribosome biogenesis and in those bacteria that undergo differentiation, in morphogenesis control. The protein is GTPase Obg of Alteromonas mediterranea (strain DSM 17117 / CIP 110805 / LMG 28347 / Deep ecotype).